Here is a 394-residue protein sequence, read N- to C-terminus: 5-azacytidine-induced protein 2 (394 aa).

The homodimerization stretch occupies residues 1–197; sequence MDALVEDDIC…IELRKAKQTD (197 aa). Coiled coils occupy residues 40-76 and 102-196; these read ALVT…LIAR and DRDN…AKQT. The tract at residues 216–257 is interaction with TBK1 and IKBKE; sequence SDNMQHAYWELKREMSNLHLVTQVQAELLRKLKTSTAIKKAC. Phosphoserine is present on residues Ser-318 and Ser-355. A disordered region spans residues 355–379; the sequence is SPPKSSETAFGETKSKTLPLPNLPP.

Homodimer. Interacts with IKBKE, TBK1 and TICAM1. Interacts with TAX1BP1. Interacts with CALCOCO2. Ubiquitinated via 'Lys-48'-linked polyubiquitination by TRIM38, leading to its degradation.

The protein resides in the cytoplasm. Functionally, adapter protein which binds TBK1 and IKBKE playing a role in antiviral innate immunity. Activates serine/threonine-protein kinase TBK1 and facilitates its oligomerization. Enhances the phosphorylation of NF-kappa-B p65 subunit RELA by TBK1. Promotes TBK1-induced as well as TNF-alpha or PMA-induced activation of NF-kappa-B. Participates in IFNB promoter activation via TICAM1. In Macaca fascicularis (Crab-eating macaque), this protein is 5-azacytidine-induced protein 2 (AZI2).